Consider the following 274-residue polypeptide: uncharacterized protein (274 aa).

This is an uncharacterized protein from Treponema pallidum (strain Nichols).